The chain runs to 944 residues: Leucine--tRNA ligase (944 aa).

The 'HIGH' region signature appears at 40–51 (PYPSGAGLHVGH). The 'KMSKS' region signature appears at 718–722 (KMSKS). ATP is bound at residue lysine 721.

Belongs to the class-I aminoacyl-tRNA synthetase family.

It localises to the cytoplasm. It catalyses the reaction tRNA(Leu) + L-leucine + ATP = L-leucyl-tRNA(Leu) + AMP + diphosphate. This Phocaeicola vulgatus (strain ATCC 8482 / DSM 1447 / JCM 5826 / CCUG 4940 / NBRC 14291 / NCTC 11154) (Bacteroides vulgatus) protein is Leucine--tRNA ligase.